The following is a 645-amino-acid chain: Beta-galactosidase BgaA (645 aa).

Substrate is bound at residue Arg102. Cys106 contacts Zn(2+). Asn140 is a substrate binding site. The active-site Proton donor is the Glu141. The Zn(2+) site is built by Cys150, Cys152, and Cys155. The Nucleophile role is filled by Glu312. Residues Trp320 and 360–363 (EQMH) each bind substrate.

The protein belongs to the glycosyl hydrolase 42 family.

It catalyses the reaction Hydrolysis of terminal non-reducing beta-D-galactose residues in beta-D-galactosides.. Its function is as follows. Hydrolyzes chromogen 5-bromo-4-chloro-3-indolyl-beta-D-galactopyranoside (X-Gal) and p-nitrophenyl-beta-D-galactoside (pNPGal). This Thermus sp protein is Beta-galactosidase BgaA.